The chain runs to 267 residues: Short-chain dehydrogenase/reductase GME11361 (267 aa).

Residues Ile10, Thr36, Lys42, Asp57, Asn80, Tyr129, Lys133, Val162, and Ser164 each coordinate NADP(+). Tyr129 (proton acceptor) is an active-site residue. Lys133 acts as the Lowers pKa of active site Tyr in catalysis.

This sequence belongs to the short-chain dehydrogenases/reductases (SDR) family.

The protein operates within secondary metabolite biosynthesis. In terms of biological role, short-chain dehydrogenase/reductase; part of the gene cluster that mediates the biosynthesis of dibenzodioxocinones such as pestalotiollide B, a novel class of inhibitors against cholesterol ester transfer protein (CEPT). The biosynthesis initiates from condensation of acetate and malonate units catalyzed by the non-reducing PKS pks8/GME11356. Pks8/GME11356 lacks a thioesterase (TE) domain, which is important to the cyclizing of the third ring of atrochrysone carboxylic acid, and the esterase GME11355 might play the role of TE and catalyzes the cyclization reaction of the C ring. The lactamase-like protein GME11357 (or other beta-lactamases in Pestalotiopsis microspora) probably hydrolyzes the thioester bond between the ACP of pks8/GME11356 and the intermediate to release atrochrysone carboxylic acid, which is spontaneously dehydrates to form endocrocin anthrone. Endocrocin anthrone is further converted to emodin via the endocrocin intermediate. Emodin is then oxidized by several enzymes such as the Baeyer-Villiger oxidase GME11358, the oxidoreductase GME11367, the short chain dehydrogenase/reductase GME11373, as well as by other oxidoreductases from the cluster, to modify the A and C rings and open the B ring, and finally yield monodictyphenone. The prenyltransferase GME11375 may catalyze the addition reaction between the C5 side chains and the carbon bone of dibenzodioxocinones. The remaining biochemical reactions to the final product dibenzodioxocinones should be methylation catalyzed by methyltransferase GME11366 and reduction and lactonization reaction catalyzed by a series of oxidordeuctases. In Pestalotiopsis microspora, this protein is Short-chain dehydrogenase/reductase GME11361.